A 483-amino-acid polypeptide reads, in one-letter code: Zinc finger CCCH domain-containing protein 25 (483 aa).

The segment at 157-184 (RNRAHICSFFIRGECTRGDECPYRHEMP) adopts a C3H1-type zinc-finger fold. Positions 228 to 301 (RTLYVGGLNS…QRLKLTWGRP (74 aa)) constitute an RRM domain. Disordered stretches follow at residues 298–317 (WGRPQVPKPDQDGSNQQGSV) and 336–483 (PPML…GSSQ). A compositionally biased stretch (pro residues) spans 336-351 (PPMLQYYMHPPPPQPP). Residues 370-380 (SSSKESGSSTS) are compositionally biased toward low complexity. Residues 381-391 (DNRGASSSSYT) show a composition bias toward polar residues. 2 stretches are compositionally biased toward low complexity: residues 392–401 (MPPHGHYPQH) and 409–423 (YGGYMQPPYQQYPPY). A compositionally biased stretch (pro residues) spans 438 to 459 (QPGPGSRPNPPHPSSVSAPPPD). The segment covering 460-476 (SVSAAPSGSSQQSADAA) has biased composition (low complexity).

This Arabidopsis thaliana (Mouse-ear cress) protein is Zinc finger CCCH domain-containing protein 25.